Reading from the N-terminus, the 670-residue chain is Histone-lysine N-methyltransferase, H3 lysine-9 specific SUVH1 (670 aa).

A disordered region spans residues 53–140 (YPFSSSQANQ…RPISRPENMN (88 aa)). Low complexity predominate over residues 68–79 (NQAQYPPQHQQP). Positions 123–133 (VKRRIPKKRPI) are enriched in basic residues. The 147-residue stretch at 211–357 (GIVPGVEIGD…HNTFKYKLVR (147 aa)) folds into the YDG domain. A Pre-SET domain is found at 432 to 492 (FGCDCANLCK…TCKNKVTQMG (61 aa)). Zn(2+) contacts are provided by C434, C436, C440, C447, C449, C475, C479, C481, and C484. Positions 495-639 (VRLEVFKTAN…PMTELTYDYG (145 aa)) constitute an SET domain. Residues 505-507 (RGW), D541, Y543, R593, and 596-597 (NH) each bind S-adenosyl-L-methionine. Zn(2+) contacts are provided by C599, C658, C660, and C665. Residues 654–670 (GKRKCFCGSAYCRGSFG) form the Post-SET domain.

The protein belongs to the class V-like SAM-binding methyltransferase superfamily. Histone-lysine methyltransferase family. Suvar3-9 subfamily. In terms of tissue distribution, expressed in leaves stems and flowers.

It is found in the nucleus. Its subcellular location is the chromosome. It localises to the centromere. It catalyses the reaction L-lysyl(9)-[histone H3] + 2 S-adenosyl-L-methionine = N(6),N(6)-dimethyl-L-lysyl(9)-[histone H3] + 2 S-adenosyl-L-homocysteine + 2 H(+). Its function is as follows. Histone methyltransferase. Methylates 'Lys-9' of histone H3. H3 'Lys-9' methylation represents a specific tag for epigenetic transcriptional repression. The chain is Histone-lysine N-methyltransferase, H3 lysine-9 specific SUVH1 (SUVH1) from Arabidopsis thaliana (Mouse-ear cress).